A 164-amino-acid chain; its full sequence is Endoribonuclease YbeY (164 aa).

Residues histidine 130, histidine 134, and histidine 140 each coordinate Zn(2+).

Belongs to the endoribonuclease YbeY family. Zn(2+) serves as cofactor.

The protein localises to the cytoplasm. In terms of biological role, single strand-specific metallo-endoribonuclease involved in late-stage 70S ribosome quality control and in maturation of the 3' terminus of the 16S rRNA. This Streptococcus mutans serotype c (strain ATCC 700610 / UA159) protein is Endoribonuclease YbeY.